We begin with the raw amino-acid sequence, 166 residues long: Cytochrome c-550 2 (166 aa).

The N-terminal stretch at 1–32 (MFSRQFGRLATLALALAVAGCAGGEQSTTAEA) is a signal peptide. Heme c is bound by residues Cys71, Cys74, and His75.

This sequence belongs to the cytochrome c family. PsbV subfamily. Requires heme c as cofactor.

It localises to the cell inner membrane. Its function is as follows. Probable low-potential cytochrome c, might function in photosystem II (PSII). The polypeptide is Cytochrome c-550 2 (psbV2) (Gloeobacter violaceus (strain ATCC 29082 / PCC 7421)).